Here is a 177-residue protein sequence, read N- to C-terminus: Antigen TyF1 (177 aa).

It belongs to the Dps family. As to quaternary structure, homodecamer.

This chain is Antigen TyF1, found in Treponema pallidum subsp. pertenue (Yaws treponeme).